Here is a 314-residue protein sequence, read N- to C-terminus: Dihydroorotate dehydrogenase (fumarate) (314 aa).

Residues Lys46, 70–74, and Asn130 each bind substrate; that span reads NSMGL. 46–47 contributes to the FMN binding site; sequence KS. Position 130 (Asn130) interacts with FMN. Catalysis depends on nucleophile residues Ser132 and Cys133. FMN-binding residues include Lys167 and Ile195. 196–197 is a binding site for substrate; that stretch reads NS. FMN is bound by residues Gly224, 252–253, and 274–275; these read GG and GT.

Belongs to the dihydroorotate dehydrogenase family. Type 1 subfamily. As to quaternary structure, homodimer. The cofactor is FMN.

Its subcellular location is the cytoplasm. The catalysed reaction is (S)-dihydroorotate + fumarate = orotate + succinate. It functions in the pathway pyrimidine metabolism; UMP biosynthesis via de novo pathway. Catalyzes the conversion of dihydroorotate to orotate with fumarate as the electron acceptor. The protein is Dihydroorotate dehydrogenase (fumarate) (URA1) of Saccharomyces mikatae (Yeast).